A 345-amino-acid polypeptide reads, in one-letter code: Phenylalanine--tRNA ligase alpha subunit (345 aa).

E255 contacts Mg(2+).

Belongs to the class-II aminoacyl-tRNA synthetase family. Phe-tRNA synthetase alpha subunit type 1 subfamily. As to quaternary structure, tetramer of two alpha and two beta subunits. Mg(2+) is required as a cofactor.

Its subcellular location is the cytoplasm. It catalyses the reaction tRNA(Phe) + L-phenylalanine + ATP = L-phenylalanyl-tRNA(Phe) + AMP + diphosphate + H(+). This Lysinibacillus sphaericus (strain C3-41) protein is Phenylalanine--tRNA ligase alpha subunit.